Reading from the N-terminus, the 560-residue chain is SET domain-containing protein 4 (560 aa).

Disordered stretches follow at residues M1–Q61 and K125–N157. The segment covering S26–S38 has biased composition (low complexity). Over residues L47–S59 the composition is skewed to polar residues. Residues E141–N157 are compositionally biased toward basic and acidic residues. The PHD-type zinc-finger motif lies at K160–D210. The SET domain maps to A346–Q475.

This sequence belongs to the SET3 family.

Functionally, putative chromatin regulator. The protein is SET domain-containing protein 4 (SET4) of Saccharomyces cerevisiae (strain ATCC 204508 / S288c) (Baker's yeast).